The chain runs to 353 residues: Guanine nucleotide-binding protein alpha-1 subunit (353 aa).

The segment at 1-26 (MGCGMSTEEKEGKARNEEIENQLKRD) is disordered. Residue G2 is the site of N-myristoyl glycine attachment. C3 is lipidated: S-palmitoyl cysteine. Residues 7 to 26 (TEEKEGKARNEEIENQLKRD) show a composition bias toward basic and acidic residues. Residues 32-353 (NEIKMLLLGA…QENLRLCGLI (322 aa)) enclose the G-alpha domain. The segment at 35-48 (KMLLLGAGESGKST) is G1 motif. E43, S44, G45, K46, S47, T48, D150, L175, T181, G203, N269, K270, D272, and A325 together coordinate GTP. Position 47 (S47) interacts with Mg(2+). The segment at 173 to 181 (DVLRSRVKT) is G2 motif. Residue T181 participates in Mg(2+) binding. Positions 196–205 (YRMFDVGGQR) are G3 motif. Residues 265 to 272 (ILFLNKID) form a G4 motif region. Residues 323 to 328 (TCATDT) form a G5 motif region.

It belongs to the G-alpha family. G(q) subfamily. G proteins are composed of 3 units; alpha, beta and gamma. The alpha chain contains the guanine nucleotide binding site. Mg(2+) is required as a cofactor.

Functionally, guanine nucleotide-binding proteins (G proteins) are involved as modulators or transducers in various transmembrane signaling systems. The sequence is that of Guanine nucleotide-binding protein alpha-1 subunit (gna-1) from Neurospora crassa (strain ATCC 24698 / 74-OR23-1A / CBS 708.71 / DSM 1257 / FGSC 987).